Here is a 233-residue protein sequence, read N- to C-terminus: Ribonuclease HII (233 aa).

The RNase H type-2 domain occupies 21–211; sequence KIIAGVDEVG…LDALPQWRHL (191 aa). A divalent metal cation is bound by residues D27, E28, and D119.

It belongs to the RNase HII family. It depends on Mn(2+) as a cofactor. Mg(2+) serves as cofactor.

The protein localises to the cytoplasm. The catalysed reaction is Endonucleolytic cleavage to 5'-phosphomonoester.. Endonuclease that specifically degrades the RNA of RNA-DNA hybrids. The chain is Ribonuclease HII (rnhB) from Streptomyces coelicolor (strain ATCC BAA-471 / A3(2) / M145).